Consider the following 316-residue polypeptide: 2,3-dihydroxyphenylpropionate/2,3-dihydroxicinnamic acid 1,2-dioxygenase (316 aa).

The Proton donor role is filled by His-118. His-182 serves as the catalytic Proton acceptor.

This sequence belongs to the LigB/MhpB extradiol dioxygenase family. Homotetramer. Fe(2+) serves as cofactor.

It catalyses the reaction 3-(2,3-dihydroxyphenyl)propanoate + O2 = (2Z,4E)-2-hydroxy-6-oxonona-2,4-dienedioate + H(+). The catalysed reaction is (2E)-3-(2,3-dihydroxyphenyl)prop-2-enoate + O2 = (2Z,4E,7E)-2-hydroxy-6-oxonona-2,4,7-trienedioate + H(+). Its pathway is aromatic compound metabolism; 3-phenylpropanoate degradation. Catalyzes the non-heme iron(II)-dependent oxidative cleavage of 2,3-dihydroxyphenylpropionic acid and 2,3-dihydroxicinnamic acid into 2-hydroxy-6-ketononadienedioate and 2-hydroxy-6-ketononatrienedioate, respectively. This Mycolicibacterium vanbaalenii (strain DSM 7251 / JCM 13017 / BCRC 16820 / KCTC 9966 / NRRL B-24157 / PYR-1) (Mycobacterium vanbaalenii) protein is 2,3-dihydroxyphenylpropionate/2,3-dihydroxicinnamic acid 1,2-dioxygenase.